The primary structure comprises 164 residues: HTH-type transcriptional regulator IscR (164 aa).

The region spanning 2–131 (RLTSKGRYAV…NNITLAELVN (130 aa)) is the HTH rrf2-type domain. The segment at residues 28–51 (LADISERQGISLSYLEQLFSRLRK) is a DNA-binding region (H-T-H motif). 3 residues coordinate [2Fe-2S] cluster: cysteine 92, cysteine 98, and cysteine 104. The tract at residues 143 to 164 (NNDTRRTANGRPQETINVNLRA) is disordered. The segment covering 152-164 (GRPQETINVNLRA) has biased composition (polar residues).

It depends on [2Fe-2S] cluster as a cofactor.

Its function is as follows. Regulates the transcription of several operons and genes involved in the biogenesis of Fe-S clusters and Fe-S-containing proteins. This chain is HTH-type transcriptional regulator IscR, found in Yersinia pseudotuberculosis serotype O:1b (strain IP 31758).